The following is a 702-amino-acid chain: MA3 DOMAIN-CONTAINING TRANSLATION REGULATORY FACTOR 1 (702 aa).

Residues 39-66 are disordered; that stretch reads LNIKSPTGGKGPVAGIPNRHVRRTHSGK. Basic residues predominate over residues 57–66; the sequence is RHVRRTHSGK. The 122-residue stretch at 122-243 folds into the MI 1 domain; it reads DYKKSVVSII…PPVFLVRSKK (122 aa). The short motif at 273–280 is the Nuclear localization signal 1 element; sequence EKKWGGST. MI domains follow at residues 286–407, 420–541, and 583–702; these read ETKK…TSDQ, QYKK…DIST, and DAKD…SATQ. The short motif at 458–465 is the Nuclear localization signal 2 element; it reads LKRLITLA.

This sequence belongs to the PDCD4 family. Binds to EIF4A1, S6K1 and S6K2. The association with ribosomes is modulated by cellular energy status and TOR activity. In terms of processing, phosphorylation by S6 kinases (e.g. S6K1 and S6K2) is modulated by cellular energy status and TOR activity. Mostly expressed in vegetative tissues, such as leaves, roots and stems, and, to a lower extent, in reproductive tissues, such as flower buds and flowers.

It localises to the nucleus. The protein localises to the cytoplasm. It is found in the cytosol. Involved in target of rapamycin (TOR)-regulated translation control, especially under energy-deficient conditions. The sequence is that of MA3 DOMAIN-CONTAINING TRANSLATION REGULATORY FACTOR 1 from Arabidopsis thaliana (Mouse-ear cress).